Consider the following 801-residue polypeptide: uncharacterized protein (801 aa).

One can recognise a PE domain in the interval 1–93 (MSWVMVSPEL…GGAYAAAEAA (93 aa)).

Belongs to the mycobacterial PE family. PGRS subfamily.

This is an uncharacterized protein from Mycobacterium tuberculosis (strain ATCC 25618 / H37Rv).